Reading from the N-terminus, the 473-residue chain is tRNA-2-methylthio-N(6)-dimethylallyladenosine synthase (473 aa).

The MTTase N-terminal domain maps to 5-125; the sequence is RKLHIKSFGC…LPQLLAEAAR (121 aa). Positions 14, 50, 88, 166, 170, and 173 each coordinate [4Fe-4S] cluster. The region spanning 152 to 384 is the Radical SAM core domain; it reads RARGISAFVT…QELIDSQQAA (233 aa). Positions 387–449 constitute a TRAM domain; it reads AAVIGTTVEV…RYSLIGELAA (63 aa). Residues 452-473 form a disordered region; the sequence is QHSGFATRSEDSPQSLPITTGA.

It belongs to the methylthiotransferase family. MiaB subfamily. Monomer. Requires [4Fe-4S] cluster as cofactor.

The protein resides in the cytoplasm. The catalysed reaction is N(6)-dimethylallyladenosine(37) in tRNA + (sulfur carrier)-SH + AH2 + 2 S-adenosyl-L-methionine = 2-methylsulfanyl-N(6)-dimethylallyladenosine(37) in tRNA + (sulfur carrier)-H + 5'-deoxyadenosine + L-methionine + A + S-adenosyl-L-homocysteine + 2 H(+). Its function is as follows. Catalyzes the methylthiolation of N6-(dimethylallyl)adenosine (i(6)A), leading to the formation of 2-methylthio-N6-(dimethylallyl)adenosine (ms(2)i(6)A) at position 37 in tRNAs that read codons beginning with uridine. The protein is tRNA-2-methylthio-N(6)-dimethylallyladenosine synthase of Rhodopseudomonas palustris (strain BisB18).